Consider the following 538-residue polypeptide: ATP synthase subunit beta, mitochondrial (538 aa).

215–222 is a binding site for ATP; the sequence is GGAGVGKT.

This sequence belongs to the ATPase alpha/beta chains family. Subunit of the F-type ATPase which has 2 components, CF(1) - the catalytic core - and CF(0) - the membrane proton channel. Interacts (via N-terminus) with lov-1 (via PLAT domain). Expressed in three categories of adult male sensory neurons: tail ray B neurons, HOB hook neuron and head cephalic (CEM) neurons.

It is found in the cell projection. The protein localises to the cilium. It localises to the mitochondrion. The protein resides in the mitochondrion inner membrane. The enzyme catalyses ATP + H2O + 4 H(+)(in) = ADP + phosphate + 5 H(+)(out). In terms of biological role, mitochondrial membrane ATP synthase (F(1)F(0) ATP synthase or Complex V) produces ATP from ADP in the presence of a proton gradient across the membrane which is generated by electron transport complexes of the respiratory chain. F-type ATPases consist of two structural domains, F(1) - containing the extramembraneous catalytic core, and F(0) - containing the membrane proton channel, linked together by a central stalk and a peripheral stalk. During catalysis, ATP synthesis in the catalytic domain of F(1) is coupled via a rotary mechanism of the central stalk subunits to proton translocation. Subunits alpha and beta form the catalytic core in F(1). Rotation of the central stalk against the surrounding subunits leads to hydrolysis of ATP in three separate catalytic sites on the beta subunits. Required during male mating behavior for the response to hermaphrodite contact, acting with lov-1 and pkd-2. May be involved in polycystin signaling. The sequence is that of ATP synthase subunit beta, mitochondrial from Caenorhabditis elegans.